The chain runs to 312 residues: Ornithine carbamoyltransferase (312 aa).

Residues 57 to 60 (STRT), Gln-84, Arg-108, and 135 to 138 (HPCQ) each bind carbamoyl phosphate. Residues Asn-166, Asp-226, and 230-231 (SM) contribute to the L-ornithine site. Carbamoyl phosphate is bound by residues 265–266 (CL) and Arg-293.

It belongs to the aspartate/ornithine carbamoyltransferase superfamily. OTCase family.

It localises to the cytoplasm. The catalysed reaction is carbamoyl phosphate + L-ornithine = L-citrulline + phosphate + H(+). It functions in the pathway amino-acid biosynthesis; L-arginine biosynthesis; L-arginine from L-ornithine and carbamoyl phosphate: step 1/3. Reversibly catalyzes the transfer of the carbamoyl group from carbamoyl phosphate (CP) to the N(epsilon) atom of ornithine (ORN) to produce L-citrulline. In Brucella suis biovar 1 (strain 1330), this protein is Ornithine carbamoyltransferase.